The following is a 668-amino-acid chain: DNA damage-responsive serine/threonine-protein kinase RqkA (668 aa).

The 260-residue stretch at 13–272 folds into the Protein kinase domain; that stretch reads YELLALLGEG…SGAALAHLWA (260 aa). Residues 19-27 and K42 contribute to the ATP site; that span reads LGEGGSAQV. D137 functions as the Proton acceptor in the catalytic mechanism.

It belongs to the protein kinase superfamily. Ser/Thr protein kinase family. It depends on pyrroloquinoline quinone as a cofactor. Post-translationally, autophosphorylated.

It catalyses the reaction L-seryl-[protein] + ATP = O-phospho-L-seryl-[protein] + ADP + H(+). It carries out the reaction L-threonyl-[protein] + ATP = O-phospho-L-threonyl-[protein] + ADP + H(+). Its activity is regulated as follows. Autokinase activity is stimulated by DNA damage. Stimulated by PQQ and DNA ends in vitro. In terms of biological role, plays an important role in radiation resistance and DNA double-strand break (DSB) repair. Involved in transcriptional regulation of genes important for bacterial stress response. Phosphorylates PprA in vitro. The chain is DNA damage-responsive serine/threonine-protein kinase RqkA (rqkA) from Deinococcus radiodurans (strain ATCC 13939 / DSM 20539 / JCM 16871 / CCUG 27074 / LMG 4051 / NBRC 15346 / NCIMB 9279 / VKM B-1422 / R1).